A 330-amino-acid chain; its full sequence is Molybdate/tungstate import ATP-binding protein WtpC (330 aa).

The region spanning 3 to 232 (LMVEGISKDY…PASEEVAKFL (230 aa)) is the ABC transporter domain. 34-41 (GPSGAGKT) provides a ligand contact to ATP.

The protein belongs to the ABC transporter superfamily. Sulfate/tungstate importer (TC 3.A.1.6) family. In terms of assembly, the complex is composed of two ATP-binding proteins (WtpC), two transmembrane proteins (WtpB) and a solute-binding protein (WtpA).

The protein localises to the cell membrane. The enzyme catalyses tungstate(in) + ATP + H2O = tungstate(out) + ADP + phosphate + H(+). Its function is as follows. Part of the ABC transporter complex WtpABC involved in molybdate/tungstate import. Responsible for energy coupling to the transport system. The sequence is that of Molybdate/tungstate import ATP-binding protein WtpC (wtpC) from Thermococcus kodakarensis (strain ATCC BAA-918 / JCM 12380 / KOD1) (Pyrococcus kodakaraensis (strain KOD1)).